The chain runs to 339 residues: Aspartate carbamoyltransferase catalytic subunit (339 aa).

Positions 59 and 60 each coordinate carbamoyl phosphate. Lys-87 contributes to the L-aspartate binding site. Carbamoyl phosphate is bound by residues Arg-109, His-142, and Gln-145. Residues Arg-182 and Arg-253 each coordinate L-aspartate. Carbamoyl phosphate-binding residues include Gly-294 and Pro-295.

This sequence belongs to the aspartate/ornithine carbamoyltransferase superfamily. ATCase family. In terms of assembly, heterododecamer (2C3:3R2) of six catalytic PyrB chains organized as two trimers (C3), and six regulatory PyrI chains organized as three dimers (R2).

It carries out the reaction carbamoyl phosphate + L-aspartate = N-carbamoyl-L-aspartate + phosphate + H(+). It functions in the pathway pyrimidine metabolism; UMP biosynthesis via de novo pathway; (S)-dihydroorotate from bicarbonate: step 2/3. Its function is as follows. Catalyzes the condensation of carbamoyl phosphate and aspartate to form carbamoyl aspartate and inorganic phosphate, the committed step in the de novo pyrimidine nucleotide biosynthesis pathway. The sequence is that of Aspartate carbamoyltransferase catalytic subunit from Prochlorococcus marinus (strain NATL2A).